A 303-amino-acid chain; its full sequence is Deoxyhypusine hydroxylase (303 aa).

HEAT-like PBS-type repeat units follow at residues 56-82 (LKHE…VLQD) and 89-115 (VRHE…YAQD). Positions 58, 91, and 92 each coordinate Fe cation. Residues 139–158 (DSPDTNPYLSVDPAPPAEEK) are disordered. HEAT-like PBS-type repeat units follow at residues 176–202 (HRYR…GLQI), 207–233 (FRHE…ALER), and 240–266 (VRHE…HVGD). H209, H242, and E243 together coordinate Fe cation.

The protein belongs to the deoxyhypusine hydroxylase family. Fe(2+) is required as a cofactor.

The catalysed reaction is [eIF5A protein]-deoxyhypusine + AH2 + O2 = [eIF5A protein]-hypusine + A + H2O. It functions in the pathway protein modification; eIF5A hypusination. Catalyzes the hydroxylation of the N(6)-(4-aminobutyl)-L-lysine intermediate produced by deoxyhypusine synthase/DHPS on a critical lysine of the eukaryotic translation initiation factor 5A/eIF-5A. This is the second step of the post-translational modification of that lysine into an unusual amino acid residue named hypusine. Hypusination is unique to mature eIF-5A factor and is essential for its function. The chain is Deoxyhypusine hydroxylase (dohh) from Xenopus laevis (African clawed frog).